The sequence spans 116 residues: Aspartate 1-decarboxylase (116 aa).

Ser25 acts as the Schiff-base intermediate with substrate; via pyruvic acid in catalysis. Ser25 bears the Pyruvic acid (Ser) mark. Residue Thr57 coordinates substrate. Tyr58 acts as the Proton donor in catalysis. A substrate-binding site is contributed by 73 to 75; it reads GPA.

It belongs to the PanD family. In terms of assembly, heterooctamer of four alpha and four beta subunits. It depends on pyruvate as a cofactor. Is synthesized initially as an inactive proenzyme, which is activated by self-cleavage at a specific serine bond to produce a beta-subunit with a hydroxyl group at its C-terminus and an alpha-subunit with a pyruvoyl group at its N-terminus.

The protein localises to the cytoplasm. The catalysed reaction is L-aspartate + H(+) = beta-alanine + CO2. It functions in the pathway cofactor biosynthesis; (R)-pantothenate biosynthesis; beta-alanine from L-aspartate: step 1/1. Catalyzes the pyruvoyl-dependent decarboxylation of aspartate to produce beta-alanine. The polypeptide is Aspartate 1-decarboxylase (Flavobacterium psychrophilum (strain ATCC 49511 / DSM 21280 / CIP 103535 / JIP02/86)).